We begin with the raw amino-acid sequence, 207 residues long: Large ribosomal subunit protein uL4 (207 aa).

Belongs to the universal ribosomal protein uL4 family. Part of the 50S ribosomal subunit.

Its function is as follows. One of the primary rRNA binding proteins, this protein initially binds near the 5'-end of the 23S rRNA. It is important during the early stages of 50S assembly. It makes multiple contacts with different domains of the 23S rRNA in the assembled 50S subunit and ribosome. Functionally, forms part of the polypeptide exit tunnel. The polypeptide is Large ribosomal subunit protein uL4 (Erythrobacter litoralis (strain HTCC2594)).